The sequence spans 427 residues: Serine hydroxymethyltransferase (427 aa).

(6S)-5,6,7,8-tetrahydrofolate contacts are provided by residues leucine 124 and 128 to 130; that span reads GHL. N6-(pyridoxal phosphate)lysine is present on lysine 233.

It belongs to the SHMT family. As to quaternary structure, homodimer. The cofactor is pyridoxal 5'-phosphate.

The protein resides in the cytoplasm. It catalyses the reaction (6R)-5,10-methylene-5,6,7,8-tetrahydrofolate + glycine + H2O = (6S)-5,6,7,8-tetrahydrofolate + L-serine. It participates in one-carbon metabolism; tetrahydrofolate interconversion. It functions in the pathway amino-acid biosynthesis; glycine biosynthesis; glycine from L-serine: step 1/1. Functionally, catalyzes the reversible interconversion of serine and glycine with tetrahydrofolate (THF) serving as the one-carbon carrier. This reaction serves as the major source of one-carbon groups required for the biosynthesis of purines, thymidylate, methionine, and other important biomolecules. Also exhibits THF-independent aldolase activity toward beta-hydroxyamino acids, producing glycine and aldehydes, via a retro-aldol mechanism. In Acidothermus cellulolyticus (strain ATCC 43068 / DSM 8971 / 11B), this protein is Serine hydroxymethyltransferase.